Consider the following 251-residue polypeptide: Zinc import ATP-binding protein ZnuC (251 aa).

Residues 5-220 (VSLENVSVSF…PEFISMFGPR (216 aa)) form the ABC transporter domain. Residue 37-44 (GPNGAGKS) coordinates ATP.

The protein belongs to the ABC transporter superfamily. Zinc importer (TC 3.A.1.15.5) family. In terms of assembly, the complex is composed of two ATP-binding proteins (ZnuC), two transmembrane proteins (ZnuB) and a solute-binding protein (ZnuA).

It localises to the cell inner membrane. The enzyme catalyses Zn(2+)(out) + ATP(in) + H2O(in) = Zn(2+)(in) + ADP(in) + phosphate(in) + H(+)(in). Part of the ABC transporter complex ZnuABC involved in zinc import. Responsible for energy coupling to the transport system. Seems to be important for the virulence. The chain is Zinc import ATP-binding protein ZnuC from Salmonella typhimurium (strain LT2 / SGSC1412 / ATCC 700720).